The chain runs to 1019 residues: Mediator of replication checkpoint protein 1 (1019 aa).

6 disordered regions span residues 1 to 33, 105 to 143, 166 to 202, 261 to 290, 443 to 683, and 965 to 1019; these read MASLDENADELHRMDSSDEASINDDQEDILDTP, QGGKSSLQKKEVEQIETQEGGDNAKGSPSSENKDSDRNS, NSATSHSKSDNLDSESADDSDLADESELSKKYTSDRK, EEEANSTEPPNVEKEEPKPSVDRSTGIVNS, IQGE…SKTF, and TQRP…SDFD. Positions 17 to 30 are enriched in acidic residues; the sequence is SDEASINDDQEDIL. Acidic residues predominate over residues 177–191; the sequence is LDSESADDSDLADES. Basic and acidic residues-rich tracts occupy residues 192-202, 271-281, and 454-468; these read ELSKKYTSDRK, NVEKEEPKPSV, and LERARNDAEKIRQLE. Acidic residues predominate over residues 476–486; sequence DEGELNDEEEV. Over residues 487–503 the composition is skewed to polar residues; sequence ISSSNTPSTKAKTTNKV. Residues 556 to 580 show a composition bias toward basic and acidic residues; it reads MIRDSFDRLSSESIKDSQKTEELHD. 2 stretches are compositionally biased toward polar residues: residues 590 to 607 and 630 to 658; these read QSTSLYVQNSQPSASQLT and NTSSTQPSQVDSLVPTQLDSTIPTQIDSV. Phosphoserine is present on Ser-604. Residue Thr-645 is modified to Phosphothreonine. Basic and acidic residues predominate over residues 671-681; it reads EERRESRRDSK.

In terms of assembly, interacts with cds1. Phosphorylated by rad3 and tel1.

The protein resides in the nucleus. Component of the replisome and is required for rad3-dependent activation of the checkpoint kinase cds1 in response to replication fork arrest. Phosphorylation allows it to mediate the activation of cds1. This is Mediator of replication checkpoint protein 1 (mrc1) from Schizosaccharomyces pombe (strain 972 / ATCC 24843) (Fission yeast).